The chain runs to 500 residues: Protein ASPARTIC PROTEASE IN GUARD CELL 1 (500 aa).

Residues 1-24 (MAFPRFLSLLAVVTLSLFLTTTDA) form the signal peptide. Positions 162 to 496 (YFSRIGVGTP…DLSKNVIGLS (335 aa)) constitute a Peptidase A1 domain. Asp180 is an active-site residue. Cystine bridges form between Cys190-Cys193, Cys196-Cys271, Cys217-Cys235, Cys222-Cys230, Cys307-Cys500, and Cys419-Cys461. Residue Asp379 is part of the active site.

Belongs to the peptidase A1 family. In terms of tissue distribution, expressed in young seedlings, leaves, guard-cells, stems, flowers and siliques, but not in roots or mesophyll cells.

It localises to the endoplasmic reticulum. With respect to regulation, inhibited by pepstatin A. In terms of biological role, aspartic protease involved in drought avoidance through abscisic acid signaling. In Arabidopsis thaliana (Mouse-ear cress), this protein is Protein ASPARTIC PROTEASE IN GUARD CELL 1 (ASPG1).